A 132-amino-acid polypeptide reads, in one-letter code: Protein NrdI (132 aa).

This sequence belongs to the NrdI family.

Functionally, probably involved in ribonucleotide reductase function. This chain is Protein NrdI, found in Staphylococcus haemolyticus (strain JCSC1435).